The following is a 318-amino-acid chain: L-lactate dehydrogenase (318 aa).

Positions 16, 37, and 68 each coordinate NAD(+). Residues Gln-85, Arg-91, and 123-126 (NPVD) contribute to the substrate site. Residues 121–123 (VAN) and Ser-146 contribute to the NAD(+) site. Residue 151–154 (DSAR) coordinates substrate. His-178 acts as the Proton acceptor in catalysis. A Phosphotyrosine modification is found at Tyr-222. Residue Thr-231 coordinates substrate.

It belongs to the LDH/MDH superfamily. LDH family. Homotetramer.

It localises to the cytoplasm. It catalyses the reaction (S)-lactate + NAD(+) = pyruvate + NADH + H(+). The protein operates within fermentation; pyruvate fermentation to lactate; (S)-lactate from pyruvate: step 1/1. Functionally, catalyzes the conversion of lactate to pyruvate. The chain is L-lactate dehydrogenase from Mycoplasma mobile (strain ATCC 43663 / 163K / NCTC 11711) (Mesomycoplasma mobile).